The chain runs to 422 residues: Histidine--tRNA ligase (422 aa).

It belongs to the class-II aminoacyl-tRNA synthetase family. In terms of assembly, homodimer.

It is found in the cytoplasm. The enzyme catalyses tRNA(His) + L-histidine + ATP = L-histidyl-tRNA(His) + AMP + diphosphate + H(+). The chain is Histidine--tRNA ligase from Vesicomyosocius okutanii subsp. Calyptogena okutanii (strain HA).